The following is a 455-amino-acid chain: Probable 1,4-beta-D-glucan cellobiohydrolase A (455 aa).

The signal sequence occupies residues 1-17; sequence MHQRALLFSAFWTAVQA. N81 is a glycosylation site (N-linked (GlcNAc...) asparagine). E227 (nucleophile) is an active-site residue. Residue E232 is the Proton donor of the active site. The N-linked (GlcNAc...) asparagine glycan is linked to N285.

Belongs to the glycosyl hydrolase 7 (cellulase C) family.

It is found in the secreted. It catalyses the reaction Hydrolysis of (1-&gt;4)-beta-D-glucosidic linkages in cellulose and cellotetraose, releasing cellobiose from the non-reducing ends of the chains.. In terms of biological role, the biological conversion of cellulose to glucose generally requires three types of hydrolytic enzymes: (1) Endoglucanases which cut internal beta-1,4-glucosidic bonds; (2) Exocellobiohydrolases that cut the disaccharide cellobiose from the non-reducing end of the cellulose polymer chain; (3) Beta-1,4-glucosidases which hydrolyze the cellobiose and other short cello-oligosaccharides to glucose. In Aspergillus flavus (strain ATCC 200026 / FGSC A1120 / IAM 13836 / NRRL 3357 / JCM 12722 / SRRC 167), this protein is Probable 1,4-beta-D-glucan cellobiohydrolase A (cbhA).